The primary structure comprises 233 residues: MRLVQLSRHSIAFPSPEGALREPNGLLALGGDLSPARLLMAYQRGIFPWFSPGDPILWWSPDPRAVLWPEQFHLSRSMKRFHQRSPYRVTLNHAFGEVIEGCASDRDEGTWITSSIVRAYHQLHELGHAHSIEVWQENTLVGGMYGVAQGALFCGESMFSRAENASKTALLVFCQDFAHSGGKLIDCQVLNNHTASLGAVDIPRRDYLDYLSVLRGYRLPERFWVPRVLFPGG.

Belongs to the L/F-transferase family.

It localises to the cytoplasm. It carries out the reaction N-terminal L-lysyl-[protein] + L-leucyl-tRNA(Leu) = N-terminal L-leucyl-L-lysyl-[protein] + tRNA(Leu) + H(+). The catalysed reaction is N-terminal L-arginyl-[protein] + L-leucyl-tRNA(Leu) = N-terminal L-leucyl-L-arginyl-[protein] + tRNA(Leu) + H(+). It catalyses the reaction L-phenylalanyl-tRNA(Phe) + an N-terminal L-alpha-aminoacyl-[protein] = an N-terminal L-phenylalanyl-L-alpha-aminoacyl-[protein] + tRNA(Phe). In terms of biological role, functions in the N-end rule pathway of protein degradation where it conjugates Leu, Phe and, less efficiently, Met from aminoacyl-tRNAs to the N-termini of proteins containing an N-terminal arginine or lysine. The chain is Leucyl/phenylalanyl-tRNA--protein transferase from Klebsiella pneumoniae subsp. pneumoniae (strain ATCC 700721 / MGH 78578).